Here is a 640-residue protein sequence, read N- to C-terminus: Chaperone protein DnaK (640 aa).

Phosphothreonine; by autocatalysis is present on Thr196. Disordered stretches follow at residues 510 to 530 (NDAK…ETKN) and 598 to 640 (AADA…DKDK).

Belongs to the heat shock protein 70 family.

In terms of biological role, acts as a chaperone. The protein is Chaperone protein DnaK of Prosthecochloris aestuarii (strain DSM 271 / SK 413).